The following is a 350-amino-acid chain: Neuronal-specific septin-3 (350 aa).

The span at 1–10 (MSKGLPEART) shows a compositional bias: basic and acidic residues. Residues 1-29 (MSKGLPEARTDAAMSELVPEPRPKPAVPM) form a disordered region. The Septin-type G domain occupies 58–331 (TGFDFNIMVV…ETYRAKRLND (274 aa)). Positions 68–75 (GQSGLGKS) are G1 motif. Residue 68-75 (GQSGLGKS) participates in GTP binding. Ser91 bears the Phosphoserine mark. Thr102 serves as a coordination point for GTP. The tract at residues 125-128 (DTPG) is G3 motif. Positions 207–210 (AKAD) are G4 motif. GTP-binding positions include 208–216 (KADTMTLEE), Gly265, and Arg280. The disordered stretch occupies residues 328–350 (RLNDNGGLPPVSVDTEESHDSNP).

The protein belongs to the TRAFAC class TrmE-Era-EngA-EngB-Septin-like GTPase superfamily. Septin GTPase family. As to quaternary structure, septins polymerize into heterooligomeric protein complexes that form filaments, and can associate with cellular membranes, actin filaments and microtubules. GTPase activity is required for filament formation. Post-translationally, phosphorylated by PKG on serine residues. Phosphorylated by PKG on Ser-91. In terms of tissue distribution, expressed in the brain including the cerebrum, hippocampus and cerebellum (at protein level).

The protein localises to the cytoplasm. Its subcellular location is the cytoskeleton. It localises to the synapse. Functionally, filament-forming cytoskeletal GTPase. May play a role in cytokinesis (Potential). The polypeptide is Neuronal-specific septin-3 (Mus musculus (Mouse)).